The primary structure comprises 664 residues: Phosphomethylpyrimidine synthase (664 aa).

Polar residues-rich tracts occupy residues 1–10 (MSTEPLSINP) and 17–27 (SATQEPSTSSK). The interval 1–37 (MSTEPLSINPLSAKPLSATQEPSTSSKPSRREQRAAA) is disordered. Substrate contacts are provided by residues Asn-261, Met-290, Tyr-319, His-355, 375 to 377 (SRG), 416 to 419 (DGLR), and Glu-455. His-459 is a binding site for Zn(2+). Substrate is bound at residue Tyr-482. His-523 contributes to the Zn(2+) binding site. Residues Cys-603, Cys-606, and Cys-611 each coordinate [4Fe-4S] cluster.

This sequence belongs to the ThiC family. In terms of assembly, homodimer. The cofactor is [4Fe-4S] cluster.

It carries out the reaction 5-amino-1-(5-phospho-beta-D-ribosyl)imidazole + S-adenosyl-L-methionine = 4-amino-2-methyl-5-(phosphooxymethyl)pyrimidine + CO + 5'-deoxyadenosine + formate + L-methionine + 3 H(+). Its pathway is cofactor biosynthesis; thiamine diphosphate biosynthesis. Functionally, catalyzes the synthesis of the hydroxymethylpyrimidine phosphate (HMP-P) moiety of thiamine from aminoimidazole ribotide (AIR) in a radical S-adenosyl-L-methionine (SAM)-dependent reaction. The sequence is that of Phosphomethylpyrimidine synthase from Pectobacterium atrosepticum (strain SCRI 1043 / ATCC BAA-672) (Erwinia carotovora subsp. atroseptica).